We begin with the raw amino-acid sequence, 279 residues long: Monoacylglycerol lipase (279 aa).

Residue Ser-110 is the Nucleophile of the active site. Catalysis depends on charge relay system residues Asp-226 and His-256.

The protein belongs to the AB hydrolase superfamily. In terms of assembly, monomer.

The protein localises to the secreted. It is found in the cell wall. It catalyses the reaction a 1-acylglycerol + H2O = glycerol + a fatty acid + H(+). It carries out the reaction Hydrolyzes glycerol monoesters of long-chain fatty acids.. The enzyme catalyses 1-butyrylglycerol + H2O = butanoate + glycerol + H(+). The catalysed reaction is 1-octanoylglycerol + H2O = octanoate + glycerol + H(+). It catalyses the reaction 1-decanoylglycerol + H2O = decanoate + glycerol + H(+). It carries out the reaction 1-dodecanoylglycerol + H2O = dodecanoate + glycerol + H(+). The enzyme catalyses 1-tetradecanoylglycerol + H2O = tetradecanoate + glycerol + H(+). The catalysed reaction is 1-(9Z-octadecenoyl)-glycerol + H2O = glycerol + (9Z)-octadecenoate + H(+). It catalyses the reaction 2-(9Z-octadecenoyl)-glycerol + H2O = glycerol + (9Z)-octadecenoate + H(+). Its activity is regulated as follows. Inhibited by the serine esterase inhibitors PMSF (100%), E600 (80%) and THL (22%). Virtual screening identified a tautomer of ZINC13451138, known inhibitor for HIV-1 integrase, as a potential inhibitor. Involved in the hydrolysis of exogenous host lipids during chronic infection. Catalyzes the hydrolysis of both monoacylglycerols (MAG) and diacylglycerols (DAG), with a preference for MAG. It hydrolyzes 2-MAG, 1-3-MAG and MAG with short, medium and long chain fatty acids such as 1-monobutyroyl-rac-glycerol (MC4), 1-mono-octanoyl-rac-glycerol (MC8), 1-monodecanoyl-rac-glycerol (MC10), 1-monolauroyl-rac-glycerol (MC12), 1-monomyristoyl-rac-glycerol (MC14) and 1-mono-oleyl-rac-glycerol (MC18:1). Also able to hydrolyze DAG with short (DiC6) and medium (DiC10) fatty acid chains, but not with longest fatty acid chains. Can also hydrolyze vinyl laurate (VC12), vinyl butyrate (VC4) and vinyl propionate (VC3). Its function is as follows. Induces an inflammatory response and cell apoptosis in the host cells. Increases expression of IL-6, NF-kappaB, TLR-2, TLR-6, TNF-alpha, and MyD88 in mouse alveolar macrophage RAW264.7 cells. Persistent expression induces RAW264.7 cell apoptosis in vitro. This is Monoacylglycerol lipase from Mycobacterium tuberculosis (strain ATCC 25618 / H37Rv).